Consider the following 833-residue polypeptide: Putative GPI inositol-deacylase C (833 aa).

The active site involves Ser-130. Residues Asn-191 and Asn-456 are each glycosylated (N-linked (GlcNAc...) asparagine). The next 5 helical transmembrane spans lie at 521 to 541, 560 to 580, 617 to 637, 672 to 692, and 723 to 743; these read ILFI…QFHA, YLLT…LSQV, VLAP…TELV, TVFV…QLAF, and TICV…AVWI. Asn-772 carries an N-linked (GlcNAc...) asparagine glycan. Residues 787–807 traverse the membrane as a helical segment; sequence LLLAYTSLHCLFYGMMQAFMI.

Belongs to the GPI inositol-deacylase family.

It localises to the endoplasmic reticulum membrane. Functionally, involved in inositol deacylation of GPI-anchored proteins which plays important roles in the quality control and ER-associated degradation of GPI-anchored proteins. This is Putative GPI inositol-deacylase C (BST1C) from Yarrowia lipolytica (strain CLIB 122 / E 150) (Yeast).